The following is a 491-amino-acid chain: Ribosome biogenesis protein YTM1 (491 aa).

The segment at 8 to 103 (IKIKFTTNES…EAFLTIEYTR (96 aa)) is ubiquitin-like (UBL) domain. The tract at residues 113–491 (SFQNDDWISS…QINKGSDISK (379 aa)) is sufficient for interaction with ERB1 and association with 66S pre-ribosomes. WD repeat units follow at residues 128-167 (RNLSAVTSSQLTITNPKILSGSYDGIVKTYNMSGKVEKQY), 169-207 (GHSAAVKSVKWISPTRIVSCGNDQQVRLWKTAYEGVVDQ), 241-280 (GHKAPVVDLAVNQQTKRILSAGYDLNVGFWSTNYKDMAKI), 318-358 (GHTE…CVDT), 360-399 (TTGFSLLSILQLPQVNLIATGSSARHINLHDPRVSASNTN), 409-449 (GHTN…SLYT), and 456-491 (STKSKIFGVCWDSEIGLISGGEDKRVQINKGSDISK). Residues 205 to 228 (VDQNEEDEEENEANEGDDGDNDME) are disordered. Residues 207–225 (QNEEDEEENEANEGDDGDN) show a composition bias toward acidic residues.

The protein belongs to the WD repeat WDR12/YTM1 family. As to quaternary structure, component of the NOP7 complex, composed of ERB1, NOP7 and YTM1. The complex is held together by ERB1, which interacts with NOP7 via its N-terminal domain and with YTM1 via a high-affinity interaction between the seven-bladed beta-propeller domains of the 2 proteins. The NOP7 complex associates with the 66S pre-ribosome. Interacts (via UBL domain) with MDN1 (via VWFA/MIDAS domain).

It localises to the nucleus. Its subcellular location is the nucleolus. The protein localises to the nucleoplasm. Its function is as follows. Component of the NOP7 complex, which is required for maturation of the 25S and 5.8S ribosomal RNAs and formation of the 60S ribosome. The sequence is that of Ribosome biogenesis protein YTM1 from Lodderomyces elongisporus (strain ATCC 11503 / CBS 2605 / JCM 1781 / NBRC 1676 / NRRL YB-4239) (Yeast).